Here is a 550-residue protein sequence, read N- to C-terminus: MQNRKKILTTCAFPYANGSLHIGHILEHIQADIWVRFNRMIGNEIYFICADDSHGTPIMIKAKKNKISPEKMVFLFYKEHKNDLSKFNISYDNYYLTHSKENYRFCKLIYKLLKRKKLIFSKYISQFYDCKINMFLSDRLIQGKCPECNSEKQYSDNCNICGANYCSTDVINPISILSKSVPIIKKSKHLFFDLPKFEKFLKKWIHSGVLKKENLRKVSEWFKNGLKPWDISRDAPYFGFKIPNEKEKYFYVWLDAPIGYLSTFKNLCDKKEKIFFSEFWDVNSKSEIYQFIGKDVIYFHSLFWPAILHGINLKKPTKLFVHGHVTLNGEKMSKSNGFVIKAKTYLKYCDSDFLRYYFSMKISSCAKDIDFSLSDFMNKVNSNIINKIVNLASRSSSFIDKYFEGYLSYKIENYELYCKFTSLKEKINKYFQSNNISFIIYEIIKLAELANQYFNKKSPWKLTEESKDKRNKLHEISSMGINMFYIIMIYLKPILPNLSKKTEDFLNISLKWENINKPLLYPHLINKFKPLCNRITKSQINYIKRESTIK.

The 'HIGH' region motif lies at 14–24; the sequence is PYANGSLHIGH. Zn(2+) contacts are provided by Cys145, Cys148, Cys158, and Cys161. The short motif at 331–335 is the 'KMSKS' region element; sequence KMSKS. Lys334 serves as a coordination point for ATP.

This sequence belongs to the class-I aminoacyl-tRNA synthetase family. MetG type 1 subfamily. As to quaternary structure, monomer. Zn(2+) serves as cofactor.

It localises to the cytoplasm. The catalysed reaction is tRNA(Met) + L-methionine + ATP = L-methionyl-tRNA(Met) + AMP + diphosphate. Its function is as follows. Is required not only for elongation of protein synthesis but also for the initiation of all mRNA translation through initiator tRNA(fMet) aminoacylation. This is Methionine--tRNA ligase from Wigglesworthia glossinidia brevipalpis.